Reading from the N-terminus, the 198-residue chain is T-cell surface glycoprotein CD3 epsilon chain (198 aa).

A signal peptide spans 1–21 (MRAGTLWRVLALWLLSVAAWG). Residues 22 to 120 (QEDDDHADDY…EACMEVDLTT (99 aa)) lie on the Extracellular side of the membrane. The Ig-like domain maps to 28-106 (ADDYTQKLFT…KENEHILYLK (79 aa)). An intrachain disulfide couples Cys49 to Cys90. Residues 121-141 (VASIVVADVCVTLGLLLLVYY) traverse the membrane as a helical segment. At 142-198 (WSKNRKAKCKPVTRGAGAGGRPRGQNKERPPPVPNPDYEPIRKGQRDLYSGLNQRGI) the chain is on the cytoplasmic side. Residues 153–198 (VTRGAGAGGRPRGQNKERPPPVPNPDYEPIRKGQRDLYSGLNQRGI) are disordered. The tract at residues 166-183 (QNKERPPPVPNPDYEPIR) is NUMB-binding region. Positions 169 to 196 (ERPPPVPNPDYEPIRKGQRDLYSGLNQR) constitute an ITAM domain. A proline-rich sequence region spans residues 170–177 (RPPPVPNP). Phosphotyrosine occurs at positions 179 and 190.

In terms of assembly, the TCR-CD3 complex is composed of a CD3D/CD3E and a CD3G/CD3E heterodimers that preferentially associate with TCRalpha and TCRbeta, respectively, to form TCRalpha/CD3E/CD3G and TCRbeta/CD3G/CD3E trimers. In turn, the hexamer interacts with CD3Z homodimer to form the TCR-CD3 complex. Alternatively, TCRalpha and TCRbeta can be replaced by TCRgamma and TCRdelta. Interacts with CD6. Interacts (via Proline-rich sequence) with NCK1; the interaction is ligand dependent but independent of tyrosine kinase activation. Phosphorylated on Tyr residues after T-cell receptor triggering by LCK in association with CD4/CD8.

It localises to the cell membrane. Part of the TCR-CD3 complex present on T-lymphocyte cell surface that plays an essential role in adaptive immune response. When antigen presenting cells (APCs) activate T-cell receptor (TCR), TCR-mediated signals are transmitted across the cell membrane by the CD3 chains CD3D, CD3E, CD3G and CD3Z. All CD3 chains contain immunoreceptor tyrosine-based activation motifs (ITAMs) in their cytoplasmic domain. Upon TCR engagement, these motifs become phosphorylated by Src family protein tyrosine kinases LCK and FYN, resulting in the activation of downstream signaling pathways. In addition of this role of signal transduction in T-cell activation, CD3E plays an essential role in correct T-cell development. Also participates in internalization and cell surface down-regulation of TCR-CD3 complexes via endocytosis sequences present in CD3E cytosolic region. In addition to its role as a TCR coreceptor, it serves as a receptor for ITPRIPL1. Ligand recognition inhibits T-cell activation by promoting interaction with NCK1, which prevents CD3E-ZAP70 interaction and blocks the ERK-NFkB signaling cascade and calcium influx. This chain is T-cell surface glycoprotein CD3 epsilon chain (CD3E), found in Oryctolagus cuniculus (Rabbit).